The sequence spans 494 residues: 3-octaprenyl-4-hydroxybenzoate carboxy-lyase (494 aa).

Residue Asn-172 coordinates Mn(2+). Prenylated FMN is bound by residues Ile-175 to Arg-177, Arg-189 to Leu-191, and Arg-194 to Gly-195. Residue Glu-238 coordinates Mn(2+). The active-site Proton donor is Asp-287.

Belongs to the UbiD family. Homohexamer. Requires prenylated FMN as cofactor. Mn(2+) is required as a cofactor.

The protein localises to the cell membrane. The catalysed reaction is a 4-hydroxy-3-(all-trans-polyprenyl)benzoate + H(+) = a 2-(all-trans-polyprenyl)phenol + CO2. It functions in the pathway cofactor biosynthesis; ubiquinone biosynthesis. Catalyzes the decarboxylation of 3-octaprenyl-4-hydroxy benzoate to 2-octaprenylphenol, an intermediate step in ubiquinone biosynthesis. This chain is 3-octaprenyl-4-hydroxybenzoate carboxy-lyase, found in Citrobacter koseri (strain ATCC BAA-895 / CDC 4225-83 / SGSC4696).